A 422-amino-acid chain; its full sequence is Dihydrofolate synthase/folylpolyglutamate synthase (422 aa).

7,8-dihydropteroate is bound at residue 29–31 (DLG). 59-62 (GKGT) is an ATP binding site. S83 serves as a coordination point for Mg(2+). 7,8-dihydropteroate is bound at residue 122–125 (TYFE). E146 lines the Mg(2+) pocket. 153-155 (LDA) is a 7,8-dihydropteroate binding site. A Mg(2+)-binding site is contributed by H173. Residue K188 is modified to N6-carboxylysine. ATP-binding residues include N257, R289, and D302.

It belongs to the folylpolyglutamate synthase family. As to quaternary structure, monomer. It depends on Mg(2+) as a cofactor.

The enzyme catalyses 7,8-dihydropteroate + L-glutamate + ATP = 7,8-dihydrofolate + ADP + phosphate + H(+). It catalyses the reaction (6S)-5,6,7,8-tetrahydrofolyl-(gamma-L-Glu)(n) + L-glutamate + ATP = (6S)-5,6,7,8-tetrahydrofolyl-(gamma-L-Glu)(n+1) + ADP + phosphate + H(+). The catalysed reaction is 10-formyltetrahydrofolyl-(gamma-L-Glu)(n) + L-glutamate + ATP = 10-formyltetrahydrofolyl-(gamma-L-Glu)(n+1) + ADP + phosphate + H(+). It carries out the reaction (6R)-5,10-methylenetetrahydrofolyl-(gamma-L-Glu)(n) + L-glutamate + ATP = (6R)-5,10-methylenetetrahydrofolyl-(gamma-L-Glu)(n+1) + ADP + phosphate + H(+). It functions in the pathway cofactor biosynthesis; tetrahydrofolate biosynthesis; 7,8-dihydrofolate from 2-amino-4-hydroxy-6-hydroxymethyl-7,8-dihydropteridine diphosphate and 4-aminobenzoate: step 2/2. It participates in cofactor biosynthesis; tetrahydrofolylpolyglutamate biosynthesis. Functionally, functions in two distinct reactions of the de novo folate biosynthetic pathway. Catalyzes the addition of a glutamate residue to dihydropteroate (7,8-dihydropteroate or H2Pte) to form dihydrofolate (7,8-dihydrofolate monoglutamate or H2Pte-Glu). Also catalyzes successive additions of L-glutamate to tetrahydrofolate or 10-formyltetrahydrofolate or 5,10-methylenetetrahydrofolate, leading to folylpolyglutamate derivatives. The protein is Dihydrofolate synthase/folylpolyglutamate synthase of Escherichia coli (strain K12).